A 99-amino-acid polypeptide reads, in one-letter code: Nucleoid-associated protein EbfC (99 aa).

Belongs to the YbaB/EbfC family. As to quaternary structure, homodimer.

It localises to the cytoplasm. It is found in the nucleoid. Binds to DNA and alters its conformation. May be involved in regulation of gene expression, nucleoid organization and DNA protection. This is Nucleoid-associated protein EbfC from Borreliella afzelii (strain PKo) (Borrelia afzelii).